Reading from the N-terminus, the 163-residue chain is Regulator of chromosome segregation (163 aa).

In terms of assembly, interacts with CpsD and ParB.

It is found in the cytoplasm. Its subcellular location is the nucleoid. It localises to the cell membrane. Required for cell division and chromosome segregation. Binds to DNA and is involved in segregating the origin of replication (oriC) region to new daughter cells. When the nucleoid is not properly segregated, involved in blocking the cell division to protect the nucleoid against premature truncation by the newly forming septum, a function which is dependent on CpsD and its autophosphorylation level. This Streptococcus pneumoniae serotype 2 (strain D39 / NCTC 7466) protein is Regulator of chromosome segregation.